Reading from the N-terminus, the 963-residue chain is Importin-13 (963 aa).

HEAT repeat units follow at residues 24 to 54 (ENVE…QAQV), 56 to 88 (PQAW…KISR), 95 to 135 (TDQY…LSMM), 142 to 179 (AVAD…EFQT), 194 to 231 (LAVE…SWVQ), 236 to 268 (LQDC…NAIS), 276 to 325 (VNTL…ALLD), 330 to 372 (WQSF…DDIL), 375 to 438 (EAEK…YEML), 440 to 476 (AELL…FQSI), 487 to 522 (VVPG…WLAD), 524 to 558 (PVMI…CREC), 562 to 600 (LPPY…LLSA), 603 to 648 (VEEN…SNLF), 676 to 716 (PVVV…VKTL), 720 to 754 (FAPM…VHIF), 761 to 803 (FPPI…ALKR), 815 to 845 (VKAV…TELL), 860 to 893 (EDGR…FALN), and 897 to 931 (FSLL…QQIL). The Importin N-terminal domain occupies 45-111 (AQKWLMQAQV…KAHSFTQITR (67 aa)).

The protein belongs to the importin beta family. Interacts with UBC9, RAN, RBM8A, eIF-1A and PAX6. Expressed in fetal brain, heart, intestine and kidney.

Its subcellular location is the cytoplasm. The protein localises to the nucleus. Its function is as follows. Functions in nuclear protein import as nuclear transport receptor. Serves as receptor for nuclear localization signals (NLS) in cargo substrates. Is thought to mediate docking of the importin/substrate complex to the nuclear pore complex (NPC) through binding to nucleoporin and the complex is subsequently translocated through the pore by an energy requiring, Ran-dependent mechanism. At the nucleoplasmic side of the NPC, Ran binds to the importin, the importin/substrate complex dissociates and importin is re-exported from the nucleus to the cytoplasm where GTP hydrolysis releases Ran. The directionality of nuclear import is thought to be conferred by an asymmetric distribution of the GTP- and GDP-bound forms of Ran between the cytoplasm and nucleus. Mediates the nuclear import of UBC9, the RBM8A/MAGOH complex, PAX6 and probably other members of the paired homeobox family. Also mediates nuclear export of eIF-1A, and the cytoplasmic release of eIF-1A is triggered by the loading of import substrates onto IPO13. This is Importin-13 (Ipo13) from Rattus norvegicus (Rat).